We begin with the raw amino-acid sequence, 208 residues long: LexA repressor (208 aa).

The segment at residues valine 30–glutamate 50 is a DNA-binding region (H-T-H motif). Residues serine 129 and lysine 167 each act as for autocatalytic cleavage activity in the active site.

The protein belongs to the peptidase S24 family. As to quaternary structure, homodimer.

The enzyme catalyses Hydrolysis of Ala-|-Gly bond in repressor LexA.. Functionally, represses a number of genes involved in the response to DNA damage (SOS response), including recA and lexA. In the presence of single-stranded DNA, RecA interacts with LexA causing an autocatalytic cleavage which disrupts the DNA-binding part of LexA, leading to derepression of the SOS regulon and eventually DNA repair. This is LexA repressor from Lacticaseibacillus casei (strain BL23) (Lactobacillus casei).